The following is a 413-amino-acid chain: Patatin-like protein 3 (413 aa).

The 192-residue stretch at 54–245 folds into the PNPLA domain; it reads LSVDGGARPE…ALGNPTAAAI (192 aa). The short motif at 58–61 is the GGXR element; that stretch reads GGAR. Catalysis depends on Ser-100, which acts as the Nucleophile. The interval 384 to 413 is disordered; sequence EHGRRKQHVPPAASGGGGGGLDCHVSKKQP.

The protein belongs to the patatin family.

Functionally, possesses non-specific lipolytic acyl hydrolase (LAH) activity. Hydrolyzes phospholipids as well as galactolipids. May play a role in disease resistance. This is Patatin-like protein 3 (PLP3) from Oryza sativa subsp. indica (Rice).